Consider the following 1061-residue polypeptide: Translation initiation factor IF-2 (1061 aa).

Disordered regions lie at residues 51–199 and 250–460; these read FARG…VAVK and AFQA…IPTE. The segment covering 67-77 has biased composition (basic and acidic residues); sequence NEPKPKIDWSR. Composition is skewed to low complexity over residues 97–113, 120–130, 167–177, 184–199, and 250–278; these read VAAA…KAPV, RPSAPRPAVTA, VPQPRQPSAVV, TPAI…VAVK, and AFQA…AEAP. The segment covering 279-291 has biased composition (pro residues); it reads PVAPEKPAVPAPP. The segment covering 340 to 360 has biased composition (gly residues); the sequence is SPGGPGGPGGGYGQRPSGPGG. A compositionally biased stretch (low complexity) spans 381 to 391; that stretch reads GFNNGPRPGFG. The segment covering 392–405 has biased composition (gly residues); that stretch reads QRPGGFGQRPGMGA. The tr-type G domain maps to 552-728; it reads SRPPVVTVMG…CLVADLGNLK (177 aa). The G1 stretch occupies residues 561–568; it reads GHVDHGKT. GTP is bound at residue 561 to 568; sequence GHVDHGKT. Residues 586 to 590 are G2; the sequence is GITQH. The segment at 614–617 is G3; that stretch reads DTPG. GTP contacts are provided by residues 614–618 and 668–671; these read DTPGH and NKID. The tract at residues 668 to 671 is G4; sequence NKID. A G5 region spans residues 704–706; the sequence is SAK.

It belongs to the TRAFAC class translation factor GTPase superfamily. Classic translation factor GTPase family. IF-2 subfamily.

The protein resides in the cytoplasm. Its function is as follows. One of the essential components for the initiation of protein synthesis. Protects formylmethionyl-tRNA from spontaneous hydrolysis and promotes its binding to the 30S ribosomal subunits. Also involved in the hydrolysis of GTP during the formation of the 70S ribosomal complex. The sequence is that of Translation initiation factor IF-2 from Acidobacterium capsulatum (strain ATCC 51196 / DSM 11244 / BCRC 80197 / JCM 7670 / NBRC 15755 / NCIMB 13165 / 161).